Reading from the N-terminus, the 943-residue chain is Isoleucine--tRNA ligase (943 aa).

The short motif at P58–H68 is the 'HIGH' region element. Position 567 (E567) interacts with L-isoleucyl-5'-AMP. The short motif at K608–S612 is the 'KMSKS' region element. Position 611 (K611) interacts with ATP. Residues C906, C909, C926, and C929 each contribute to the Zn(2+) site.

Belongs to the class-I aminoacyl-tRNA synthetase family. IleS type 1 subfamily. As to quaternary structure, monomer. Zn(2+) serves as cofactor.

The protein localises to the cytoplasm. It catalyses the reaction tRNA(Ile) + L-isoleucine + ATP = L-isoleucyl-tRNA(Ile) + AMP + diphosphate. In terms of biological role, catalyzes the attachment of isoleucine to tRNA(Ile). As IleRS can inadvertently accommodate and process structurally similar amino acids such as valine, to avoid such errors it has two additional distinct tRNA(Ile)-dependent editing activities. One activity is designated as 'pretransfer' editing and involves the hydrolysis of activated Val-AMP. The other activity is designated 'posttransfer' editing and involves deacylation of mischarged Val-tRNA(Ile). This Pseudomonas entomophila (strain L48) protein is Isoleucine--tRNA ligase.